Here is a 140-residue protein sequence, read N- to C-terminus: ATP synthase epsilon chain (140 aa).

It belongs to the ATPase epsilon chain family. As to quaternary structure, F-type ATPases have 2 components, CF(1) - the catalytic core - and CF(0) - the membrane proton channel. CF(1) has five subunits: alpha(3), beta(3), gamma(1), delta(1), epsilon(1). CF(0) has three main subunits: a, b and c.

It is found in the cell inner membrane. Its function is as follows. Produces ATP from ADP in the presence of a proton gradient across the membrane. The sequence is that of ATP synthase epsilon chain from Bdellovibrio bacteriovorus (strain ATCC 15356 / DSM 50701 / NCIMB 9529 / HD100).